Here is a 108-residue protein sequence, read N- to C-terminus: Large ribosomal subunit protein bL21c (108 aa).

This sequence belongs to the bacterial ribosomal protein bL21 family. In terms of assembly, part of the 50S ribosomal subunit.

The protein resides in the plastid. The protein localises to the chloroplast. In terms of biological role, this protein binds to 23S rRNA. This is Large ribosomal subunit protein bL21c from Cyanidium caldarium (Red alga).